The sequence spans 295 residues: Movement protein (295 aa).

Positions 256–295 are disordered; it reads KKTNVKEESPTSDPQSGEVSSMTQSVPGAADTRIPKPRRR. Polar residues predominate over residues 266-281; the sequence is TSDPQSGEVSSMTQSV.

The protein belongs to the bromovirus movement protein family.

The protein resides in the host cell junction. It is found in the host plasmodesma. Functionally, transports viral genome to neighboring plant cells directly through plasmosdesmata, without any budding. The movement protein allows efficient cell to cell propagation, by bypassing the host cell wall barrier. Acts by forming a tubular structure at the host plasmodesmata, enlarging it enough to allow free passage of virion capsids. The protein is Movement protein of Broad bean mottle virus.